The chain runs to 427 residues: MKILTGTVNELLNELKIETDTNTSIQVETEVKTIIEKVKTAGDQALFDFTSKFDGVGLTELRVPAADIQAASAKIEPAFLDALQQAKVNIESFHSKQKQHAFLDSEKDGVIRGQLIRPLETVGVYVPGGTAAYPSSVLMNVLPAKIAGVKRIVMITPPGENGINPYVLASAQLAGVDEIYQVGGAHGIAALAHGTESIPKVDKIVGPGNIYVATAKREVFGLVDIDMIAGPSEIVVLADENANPAFIAADLLSQAEHDILARAILITTSKKIAEETQNEIDKQLENLPRKAIAQKSIETRGKIIIAATTQEMFDIMNEIAPEHLEVQLENPMNYLYQIKNAGSIFLGSYASEPLGDYFAGPNHVLPTSGTAKFFSPLGVEDFTKRSAFISYTKEALAKEKDAIVLLAKKEGLDAHAKAIQIRFEEEN.

The substrate site is built by serine 232, glutamine 254, and histidine 257. Zn(2+) is bound by residues glutamine 254 and histidine 257. Catalysis depends on proton acceptor residues glutamate 322 and histidine 323. 4 residues coordinate substrate: histidine 323, aspartate 356, glutamate 410, and histidine 415. Position 356 (aspartate 356) interacts with Zn(2+). Residue histidine 415 participates in Zn(2+) binding.

It belongs to the histidinol dehydrogenase family. Zn(2+) is required as a cofactor.

It carries out the reaction L-histidinol + 2 NAD(+) + H2O = L-histidine + 2 NADH + 3 H(+). Its pathway is amino-acid biosynthesis; L-histidine biosynthesis; L-histidine from 5-phospho-alpha-D-ribose 1-diphosphate: step 9/9. Catalyzes the sequential NAD-dependent oxidations of L-histidinol to L-histidinaldehyde and then to L-histidine. In Listeria monocytogenes serotype 4b (strain F2365), this protein is Histidinol dehydrogenase.